The sequence spans 141 residues: VLSAEDKANVKAVWSKLGGHGAEYGAEALGRMFESHPTTKTYPFHFDVSHGSAQVKGHGKKVADALATAASHLDDLPGALSALSDLHAHKLRVDPVNFKLLSHCLLVTLAAHHPAEFTPAAHASLDKFLASVSTVLTSKYR.

Residues 1–141 (VLSAEDKANV…VSTVLTSKYR (141 aa)) form the Globin domain. Ser3 is modified (phosphoserine). Residues Lys7 and Lys11 each carry the N6-succinyllysine modification. N6-acetyllysine; alternate is present on Lys16. An N6-succinyllysine; alternate modification is found at Lys16. At Tyr24 the chain carries Phosphotyrosine. Ser35 bears the Phosphoserine mark. N6-succinyllysine is present on Lys40. Ser49 carries the phosphoserine modification. His58 is an O2 binding site. Residue His87 coordinates heme b. Residue Ser102 is modified to Phosphoserine. Position 108 is a phosphothreonine (Thr108). Phosphoserine is present on residues Ser124 and Ser131. Thr134 and Thr137 each carry phosphothreonine. Residue Ser138 is modified to Phosphoserine.

This sequence belongs to the globin family. Heterotetramer of two alpha chains and two beta chains. As to expression, red blood cells.

Functionally, involved in oxygen transport from the lung to the various peripheral tissues. The protein is Hemoglobin subunit alpha of Peromyscus crinitus (Canyon mouse).